The sequence spans 431 residues: Beclin-2 (431 aa).

The disordered stretch occupies residues 17 to 74; that stretch reads LSGSSESRSLPAAPAPTSGQAEPGDTREPGVTTREVTDAEEQQDGASSRSPPGDGSVS. Residues 125 to 248 are a coiled coil; sequence LLEQLDIQLA…ARVQRDRLKE (124 aa). The segment at 173–243 is required for homodimer formation; sequence EARLVQELED…NQLQYARVQR (71 aa).

This sequence belongs to the beclin family. As to quaternary structure, homodimer (via coiled-coil domain). Interacts (via coiled-coil domain) with ATG14 (via coiled-coil domain); this interaction is tighter than BECN2 self-association. Interacts with AMBRA1, UVRAG and PIK3C3/VPS34; these interactions are not disrupted by starvation. Does not interact with RUBCN. Interacts (via N-terminus) with GPRASP1/GASP1; the interaction is direct. As to expression, present in fetal and adult brain (at protein level).

Its subcellular location is the cytoplasm. In terms of biological role, involved in 2 distinct lysosomal degradation pathways: acts as a regulator of autophagy and as a regulator of G-protein coupled receptors turnover. Regulates degradation in lysosomes of a variety of G-protein coupled receptors via its interaction with GPRASP1/GASP1. This chain is Beclin-2, found in Homo sapiens (Human).